The primary structure comprises 276 residues: Putative serine/threonine-protein kinase R436 (276 aa).

The Protein kinase domain occupies 6–266 (YSLDKLIQNR…IKQKLNHFKT (261 aa)). ATP-binding positions include 12 to 20 (IQNRKSKRI) and Lys35. Catalysis depends on Asp132, which acts as the Proton acceptor.

It belongs to the protein kinase superfamily. Ser/Thr protein kinase family.

It carries out the reaction L-seryl-[protein] + ATP = O-phospho-L-seryl-[protein] + ADP + H(+). The catalysed reaction is L-threonyl-[protein] + ATP = O-phospho-L-threonyl-[protein] + ADP + H(+). The polypeptide is Putative serine/threonine-protein kinase R436 (Acanthamoeba polyphaga (Amoeba)).